A 205-amino-acid chain; its full sequence is DNA-directed RNA polymerase RPB5 homolog (205 aa).

This sequence belongs to the archaeal RpoH/eukaryotic RPB5 RNA polymerase subunit family. In terms of assembly, part of the viral DNA-directed RNA polymerase that consists of 8 polII-like subunits (RPB1, RPB2, RPB3, RPB5, RPB6, RPB7, RPB9, RPB10), a capping enzyme and a termination factor.

It localises to the host cytoplasm. The protein resides in the virion. Functionally, component of the DNA-directed RNA polymerase (RNAP) that catalyzes the transcription in the cytoplasm of viral DNA into RNA using the four ribonucleoside triphosphates as substrates. This is DNA-directed RNA polymerase RPB5 homolog from Ornithodoros (relapsing fever ticks).